The following is an 844-amino-acid chain: Penicillin-binding protein 1B (844 aa).

Residues 1 to 10 (MAGNDREPIG) show a composition bias toward basic and acidic residues. Positions 1 to 60 (MAGNDREPIGRKGKPTRPVKQKVSRRRYEDDDDYDDYDDYEDEEPMPRKGKGKGKGRKPR) are disordered. Over 1 to 63 (MAGNDREPIG…GKGRKPRGKR (63 aa)) the chain is Cytoplasmic. Positions 11–25 (RKGKPTRPVKQKVSR) are enriched in basic residues. Positions 30–44 (DDDDYDDYDDYEDEE) are enriched in acidic residues. A compositionally biased stretch (basic residues) spans 48–60 (RKGKGKGKGRKPR). The helical; Signal-anchor for type II membrane protein transmembrane segment at 64 to 87 (GWLWLLLKLAIVFAVLIAIYGVYL) threads the bilayer. The membrane association stretch occupies residues 88-250 (DQKIRSRIDG…DGISLYSIGR (163 aa)). At 88–844 (DQKIRSRIDG…GWIKDMFGSN (757 aa)) the chain is on the periplasmic side. The tract at residues 109–200 (RMVNLEPDMT…QFGFFRLDPR (92 aa)) is uvrB domain 2 homolog. The interval 195–367 (FRLDPRLITM…SIYNPWRNPK (173 aa)) is transglycosylase. The Proton donor; for transglycosylase activity role is filled by E233. The segment at 444 to 736 (SVAQDAAEKA…NNQPTKLYGA (293 aa)) is transpeptidase. The Acyl-ester intermediate; for transpeptidase activity role is filled by S510. Over residues 793 to 825 (LCQQSEMQQQPSGNPFDQSSQPQQQPQQQPAQQ) the composition is skewed to low complexity. The interval 793–835 (LCQQSEMQQQPSGNPFDQSSQPQQQPQQQPAQQEQKDSDGVAG) is disordered.

The protein in the N-terminal section; belongs to the glycosyltransferase 51 family. This sequence in the C-terminal section; belongs to the transpeptidase family. As to quaternary structure, forms a trimeric complex with MipA and MltA. Has also been shown to exist as monomer or homodimer; homodimer of Alpha and Gamma isozymes can be found. Interacts with UvrA, FtsL and FtsN.

Its subcellular location is the cell inner membrane. It catalyses the reaction [GlcNAc-(1-&gt;4)-Mur2Ac(oyl-L-Ala-gamma-D-Glu-L-Lys-D-Ala-D-Ala)](n)-di-trans,octa-cis-undecaprenyl diphosphate + beta-D-GlcNAc-(1-&gt;4)-Mur2Ac(oyl-L-Ala-gamma-D-Glu-L-Lys-D-Ala-D-Ala)-di-trans,octa-cis-undecaprenyl diphosphate = [GlcNAc-(1-&gt;4)-Mur2Ac(oyl-L-Ala-gamma-D-Glu-L-Lys-D-Ala-D-Ala)](n+1)-di-trans,octa-cis-undecaprenyl diphosphate + di-trans,octa-cis-undecaprenyl diphosphate + H(+). The enzyme catalyses Preferential cleavage: (Ac)2-L-Lys-D-Ala-|-D-Ala. Also transpeptidation of peptidyl-alanyl moieties that are N-acyl substituents of D-alanine.. It functions in the pathway cell wall biogenesis; peptidoglycan biosynthesis. In terms of biological role, cell wall formation. Synthesis of cross-linked peptidoglycan from the lipid intermediates. The enzyme has a penicillin-insensitive transglycosylase N-terminal domain (formation of linear glycan strands) and a penicillin-sensitive transpeptidase C-terminal domain (cross-linking of the peptide subunits). This Escherichia coli (strain K12) protein is Penicillin-binding protein 1B (mrcB).